Reading from the N-terminus, the 263-residue chain is Calpain small subunit 1 (263 aa).

An N-acetylmethionine modification is found at M1. Phosphoserine is present on S6. An EF-hand 1; atypical domain is found at 91–125 (EEVRQFRRLFAQLAGDDMEVSATELMNILNKVVTR). 10 residues coordinate Ca(2+): A104, D107, E109, E114, D132, D147, D149, T151, K153, and E158. EF-hand domains are found at residues 134-167 (FGID…NNIK), 164-199 (NNIK…AGFR), 200-228 (LNEH…ISCL), and 229-263 (VRLD…TMYS). K174 is subject to N6-acetyllysine. Ca(2+)-binding residues include D177, D179, S181, T183, E188, and D220.

Homodimer or heterodimer of a large (catalytic) and a small (regulatory) subunit. In presence of calcium, the heterodimer dissociates.

The protein localises to the cytoplasm. It localises to the cell membrane. Functionally, regulatory subunit of the calcium-regulated non-lysosomal thiol-protease which catalyzes limited proteolysis of substrates involved in cytoskeletal remodeling and signal transduction. Essential for embryonic development. The protein is Calpain small subunit 1 (CAPNS1) of Bos taurus (Bovine).